We begin with the raw amino-acid sequence, 443 residues long: Threonine/serine transporter TdcC (443 aa).

The next 11 helical transmembrane spans lie at 22–42 (TTWT…FFPI), 44–64 (AGFG…PIAF), 97–117 (GVVI…IYGV), 140–160 (FVAL…KDLM), 163–183 (VMSY…LSLI), 207–227 (ILVT…FSPI), 261–281 (MLMV…LSPA), 319–339 (ASII…LGTL), 366–386 (ISMI…PNIL), 389–409 (IEAM…MYAI), and 423–443 (DNVF…YKLF).

The protein belongs to the amino acid/polyamine transporter 2 family. SdaC/TdcC subfamily.

It is found in the cell inner membrane. The catalysed reaction is L-threonine(in) + H(+)(in) = L-threonine(out) + H(+)(out). It carries out the reaction L-serine(in) + H(+)(in) = L-serine(out) + H(+)(out). Its function is as follows. Involved in the import of threonine and serine into the cell, with the concomitant import of a proton (symport system). The polypeptide is Threonine/serine transporter TdcC (Citrobacter koseri (strain ATCC BAA-895 / CDC 4225-83 / SGSC4696)).